A 151-amino-acid polypeptide reads, in one-letter code: Snaclec 3 (151 aa).

A signal peptide spans 1 to 23 (MGRLVFVSFSLLVVFLSLSGTAA). 3 cysteine pairs are disulfide-bonded: cysteine 25-cysteine 36, cysteine 53-cysteine 149, and cysteine 125-cysteine 141. A C-type lectin domain is found at 32-150 (YEGHCYKPFN…CGEINPFVCK (119 aa)).

Belongs to the snaclec family. As to quaternary structure, heterodimer; disulfide-linked. In terms of tissue distribution, expressed by the venom gland.

It is found in the secreted. Its function is as follows. Interferes with one step of hemostasis (modulation of platelet aggregation, or coagulation cascade, for example). This chain is Snaclec 3, found in Sistrurus catenatus edwardsii (Desert massasauga).